A 629-amino-acid polypeptide reads, in one-letter code: Chaperone protein HtpG (629 aa).

The a; substrate-binding stretch occupies residues 1–336 (MSSTENNGTA…TEDLSLNVSR (336 aa)). The b stretch occupies residues 337–549 (EMVQSSPVMA…KDAIDSQLER (213 aa)). The segment at 550–629 (MMKMMNTPMP…ELIEAATLTR (80 aa)) is c.

The protein belongs to the heat shock protein 90 family. In terms of assembly, homodimer.

Its subcellular location is the cytoplasm. Functionally, molecular chaperone. Has ATPase activity. This Chlorobium chlorochromatii (strain CaD3) protein is Chaperone protein HtpG.